The sequence spans 711 residues: Putative membrane protein IgaA homolog (711 aa).

A topological domain (periplasmic) is located at residue M1. The helical transmembrane segment at 2–22 (STIVIFLAALLACSLLAGWLI) threads the bilayer. Over 23–204 (KVRSRRRQLP…YALSRPRGLR (182 aa)) the chain is Cytoplasmic. Helical transmembrane passes span 205–225 (EALL…TPDV) and 226–246 (FVPW…WGLF). At 247-339 (APPAKSSLRE…KNFPLQHWLR (93 aa)) the chain is on the cytoplasmic side. Residues 340–360 (STIIAAGSLLVLFMLLFWIPL) traverse the membrane as a helical segment. At 361 to 655 (DMPLKFTLSW…IPDRSGLWRY (295 aa)) the chain is on the periplasmic side. A helical transmembrane segment spans residues 656–676 (LSTTLLLLTMLGSAIYNGVQA). Residues 677–711 (WRRYQRHRTRMMKIQAYYESCLNPQLITPSESLIE) are Cytoplasmic-facing.

This sequence belongs to the IgaA family.

It localises to the cell inner membrane. This is Putative membrane protein IgaA homolog (yrfF) from Escherichia coli O157:H7.